Reading from the N-terminus, the 148-residue chain is Glutaredoxin-C10 (148 aa).

The tract at residues 16 to 55 (TLDLTVHPPPPPPLPPPAPSTVSSSTASTSLSFDEEETSE) is disordered. Pro residues predominate over residues 22–34 (HPPPPPPLPPPAP). The span at 35–47 (STVSSSTASTSLS) shows a compositional bias: low complexity. Residues 55–147 (ESKIGRLISE…PRLVEVGALW (93 aa)) form the Glutaredoxin domain. Residues C76 and C79 are joined by a disulfide bond.

This sequence belongs to the glutaredoxin family. CC-type subfamily.

The protein localises to the cytoplasm. In terms of biological role, has a glutathione-disulfide oxidoreductase activity in the presence of NADPH and glutathione reductase. Reduces low molecular weight disulfides and proteins. In Arabidopsis thaliana (Mouse-ear cress), this protein is Glutaredoxin-C10 (GRXC10).